The chain runs to 264 residues: Taurine import ATP-binding protein TauB (264 aa).

One can recognise an ABC transporter domain in the interval 4-233; the sequence is LQLERISAQY…RYAAGESARA (230 aa). Residue 38–45 participates in ATP binding; the sequence is GPSGSGKT.

It belongs to the ABC transporter superfamily. Taurine importer (TC 3.A.1.17.1) family. As to quaternary structure, the complex is composed of two ATP-binding proteins (TauB), two transmembrane proteins (TauC) and a solute-binding protein (TauA).

The protein localises to the cell inner membrane. It carries out the reaction taurine(out) + ATP + H2O = taurine(in) + ADP + phosphate + H(+). Part of the ABC transporter complex TauABC involved in taurine import. Responsible for energy coupling to the transport system. In Pseudomonas fluorescens (strain Pf0-1), this protein is Taurine import ATP-binding protein TauB.